Reading from the N-terminus, the 64-residue chain is Large ribosomal subunit protein uL29 (64 aa).

Belongs to the universal ribosomal protein uL29 family.

This chain is Large ribosomal subunit protein uL29, found in Pseudomonas entomophila (strain L48).